The following is a 328-amino-acid chain: MSRLAHNKALPYKIIVDLSFHRTRLPSDVSSLIKFEQRPAIINIHGLLGSHVMFHSLNKLLSRKLDADIFSVDVRNHGISPKAIPYDYTTLTNDLIYFIETHIGLERPIYLLGFSMGGKIALLTTLYKNINIRKCISIDLPPYETPELDPMILQNYDLIMRIIRRDVKILRGSPSWQKKVLELFKSLECNKRKCGGAVALYFANGFLSVKSNNVHQAQLHYEQQQHDPYINYSMPLSSMPNLLDEVKKWPDLSNQRDFFQKGTASRKVLFMKGLQSNFINNDYSLLRYNFPCADVREFNTGHNLLLENPEDSFKCILNFFAEETLDFE.

The 271-residue stretch at 39 to 309 (PAIINIHGLL…TGHNLLLENP (271 aa)) folds into the AB hydrolase-1 domain. Catalysis depends on charge relay system residues Ser115, Asp139, and His302.

Belongs to the AB hydrolase superfamily.

The protein localises to the mitochondrion. The enzyme catalyses ethanol + acetyl-CoA = ethyl acetate + CoA. The catalysed reaction is acetyl-CoA + H2O = acetate + CoA + H(+). It catalyses the reaction ethyl acetate + H2O = ethanol + acetate + H(+). Its function is as follows. Alcohol acetyltransferase that catalyzes the synthesis of ethyl acetate from ethanol and acetyl-CoA. Can also function as a thioesterase by hydrolyzing acetyl-CoA in the absence of ethanol, as well as esterase hydrolyzing ethyl acetate. The polypeptide is Ethanol acetyltransferase 1 (Saccharomyces cerevisiae (strain ATCC 204508 / S288c) (Baker's yeast)).